Consider the following 313-residue polypeptide: Aspartate carbamoyltransferase catalytic subunit (313 aa).

Carbamoyl phosphate is bound by residues Arg-58 and Thr-59. Lys-86 provides a ligand contact to L-aspartate. The carbamoyl phosphate site is built by Arg-108, His-136, and Gln-139. Residues Arg-169 and Arg-223 each coordinate L-aspartate. 2 residues coordinate carbamoyl phosphate: Gly-265 and Pro-266.

It belongs to the aspartate/ornithine carbamoyltransferase superfamily. ATCase family. As to quaternary structure, heterododecamer (2C3:3R2) of six catalytic PyrB chains organized as two trimers (C3), and six regulatory PyrI chains organized as three dimers (R2).

The catalysed reaction is carbamoyl phosphate + L-aspartate = N-carbamoyl-L-aspartate + phosphate + H(+). The protein operates within pyrimidine metabolism; UMP biosynthesis via de novo pathway; (S)-dihydroorotate from bicarbonate: step 2/3. Its function is as follows. Catalyzes the condensation of carbamoyl phosphate and aspartate to form carbamoyl aspartate and inorganic phosphate, the committed step in the de novo pyrimidine nucleotide biosynthesis pathway. The polypeptide is Aspartate carbamoyltransferase catalytic subunit (Anaeromyxobacter dehalogenans (strain 2CP-C)).